Consider the following 507-residue polypeptide: MASMVSFCFLLLFLAFFASSFNEIYAEESESKEFVLTLDKSNFFDTVSKHNFIVVEFYAPWCGHCKKLAPEYEKAASILSSHDPPVILAKVDANEEANKELASEFEVRGFPTIKILRNGGKIVQEYKGPRDADGIVDYLKKQSGPPSAEIKSIEDATNLVSEKKIVVVGIFPKFSGEEFENFSALAEKLRSDYEFGHTLDAKLLPRGESSVSGPVVRLFKPFDELFVDFQDFDVNALEKLVEESSVPTVTIFDKDPSNHPFVVKFFNNANAKAMLFLNFTSEVVESFRSIYREVAEKNKGEGISFLIGDTESSQGAFQYFGLRDDQVPLIVIQNNDGTKYLKPNLEPDHIASWVKEYKDCKLSPYRKSEPIPEHNNEPVKVVVADSLDEIVFKSGKNVLLEFYAPWCGHCKQLAPILDEVAVSFENDPDVLIAKLDATANDYPTNTFDVKGYPTLYFKSASGELLQYDGGRTKEDFIEFIEKNREKSSKKESIVKDDQTDSETKAEL.

The first 20 residues, 1–20, serve as a signal peptide directing secretion; the sequence is MASMVSFCFLLLFLAFFASS. In terms of domain architecture, Thioredoxin 1 spans 21 to 144; that stretch reads FNEIYAEESE…IVDYLKKQSG (124 aa). Active-site nucleophile residues include cysteine 62 and cysteine 65. A disulfide bridge links cysteine 62 with cysteine 65. 2 N-linked (GlcNAc...) asparagine glycosylation sites follow: asparagine 181 and asparagine 278. Residues 365-485 enclose the Thioredoxin 2 domain; sequence YRKSEPIPEH…FIEFIEKNRE (121 aa). Catalysis depends on nucleophile residues cysteine 407 and cysteine 410. Cysteine 407 and cysteine 410 are joined by a disulfide. Positions 484 to 507 are disordered; it reads REKSSKKESIVKDDQTDSETKAEL. A Prevents secretion from ER motif is present at residues 504–507; the sequence is KAEL.

The protein belongs to the protein disulfide isomerase family.

It is found in the endoplasmic reticulum lumen. It carries out the reaction Catalyzes the rearrangement of -S-S- bonds in proteins.. Participates in the folding of proteins containing disulfide bonds, may be involved in glycosylation, prolyl hydroxylation and triglyceride transfer. The chain is Protein disulfide-isomerase (PDI) from Datisca glomerata (Durango root).